The following is a 91-amino-acid chain: Probable Fe(2+)-trafficking protein (91 aa).

Belongs to the Fe(2+)-trafficking protein family.

Its function is as follows. Could be a mediator in iron transactions between iron acquisition and iron-requiring processes, such as synthesis and/or repair of Fe-S clusters in biosynthetic enzymes. In Burkholderia ambifaria (strain MC40-6), this protein is Probable Fe(2+)-trafficking protein.